Reading from the N-terminus, the 361-residue chain is Molybdenum import ATP-binding protein ModC (361 aa).

One can recognise an ABC transporter domain in the interval 1 to 235 (MDGLRLRFRR…VDLPLALDDD (235 aa)). Residue 33 to 40 (GHSGSGKS) coordinates ATP. A Mop domain is found at 296–361 (QSSILNRLPV…AQIKSVAVLA (66 aa)).

Belongs to the ABC transporter superfamily. Molybdate importer (TC 3.A.1.8) family. As to quaternary structure, the complex is composed of two ATP-binding proteins (ModC), two transmembrane proteins (ModB) and a solute-binding protein (ModA).

It is found in the cell inner membrane. It carries out the reaction molybdate(out) + ATP + H2O = molybdate(in) + ADP + phosphate + H(+). Part of the ABC transporter complex ModABC involved in molybdenum import. Responsible for energy coupling to the transport system. This chain is Molybdenum import ATP-binding protein ModC, found in Pseudomonas aeruginosa (strain ATCC 15692 / DSM 22644 / CIP 104116 / JCM 14847 / LMG 12228 / 1C / PRS 101 / PAO1).